Consider the following 86-residue polypeptide: KKNMLLVNPIVGIGGLFVGAPMLTANLGISSYAAKKVIDDINTGSAVATIIALVTAVVGGGLITAGIVATTKSLIKKYGAKYSAAW.

Positions 23–86 (LTANLGISSY…KYGAKYSAAW (64 aa)) form a cross-link, cyclopeptide (Leu-Trp).

Its subcellular location is the secreted. Functionally, cyclopeptide antibiotic with bacteriolytic activity against the Gram-positive bacteria S.aureus and S.thermophilus, and lower activity against the Gram-negative bacteria E.coli and P.aeruginosa. The sequence is that of Bacteriocin thailandicin from Enterococcus thailandicus.